The sequence spans 340 residues: Phospho-N-acetylmuramoyl-pentapeptide-transferase (340 aa).

10 helical membrane passes run 3–23, 53–73, 79–99, 119–139, 144–164, 176–196, 200–220, 227–247, 250–270, and 315–335; these read MSLIAGVAAFVLTVLAMPHFI, GGTVFLVVAILISLIFNFHVF, AYGATAGILFVILIYGIIGFL, MALQIVAGLLFYFIHVLPSGT, IGGLTIQLGVFYVLFVLFWIV, IDGLASVSVVISLIAYGIIAF, ELAILTIIITMIGALLGFFVF, VFMGDVGSLSLGAMLAVISIA, VEWTLLLIGVVYVLETASVML, and VDAFLWTIGALASSITLWMVL.

This sequence belongs to the glycosyltransferase 4 family. MraY subfamily. Mg(2+) serves as cofactor.

It is found in the cell membrane. The enzyme catalyses UDP-N-acetyl-alpha-D-muramoyl-L-alanyl-gamma-D-glutamyl-L-lysyl-D-alanyl-D-alanine + di-trans,octa-cis-undecaprenyl phosphate = Mur2Ac(oyl-L-Ala-gamma-D-Glu-L-Lys-D-Ala-D-Ala)-di-trans,octa-cis-undecaprenyl diphosphate + UMP. It functions in the pathway cell wall biogenesis; peptidoglycan biosynthesis. Functionally, catalyzes the initial step of the lipid cycle reactions in the biosynthesis of the cell wall peptidoglycan: transfers peptidoglycan precursor phospho-MurNAc-pentapeptide from UDP-MurNAc-pentapeptide onto the lipid carrier undecaprenyl phosphate, yielding undecaprenyl-pyrophosphoryl-MurNAc-pentapeptide, known as lipid I. This chain is Phospho-N-acetylmuramoyl-pentapeptide-transferase, found in Streptococcus thermophilus (strain ATCC BAA-250 / LMG 18311).